A 432-amino-acid polypeptide reads, in one-letter code: Type I restriction enzyme MjaIX specificity subunit (432 aa).

This sequence belongs to the type-I restriction system S methylase family. In terms of assembly, the type I restriction/modification system is composed of three polypeptides R, M and S.

Functionally, the specificity (S) subunit of a type I restriction enzyme; this subunit dictates DNA sequence specificity. The M and S subunits together form a methyltransferase (MTase) that methylates A-3 on the top and A-2 on the bottom strand of the sequence 5'-CCAN(5)GTR-3'. In the presence of the R subunit the complex can also act as an endonuclease, binding to the same target sequence but cutting the DNA some distance from this site. Whether the DNA is cut or modified depends on the methylation state of the target sequence. When the target site is unmodified, the DNA is cut. When the target site is hemimethylated, the complex acts as a maintenance MTase modifying the DNA so that both strands become methylated. After locating a non-methylated recognition site, the enzyme complex serves as a molecular motor that translocates DNA in an ATP-dependent manner until a collision occurs that triggers cleavage. The protein is Type I restriction enzyme MjaIX specificity subunit (hsdS) of Methanocaldococcus jannaschii (strain ATCC 43067 / DSM 2661 / JAL-1 / JCM 10045 / NBRC 100440) (Methanococcus jannaschii).